The following is a 220-amino-acid chain: Adenylate kinase (220 aa).

Gly-12–Thr-17 is an ATP binding site. The NMP stretch occupies residues Ser-32–Val-62. AMP contacts are provided by residues Thr-33, Arg-38, Glu-60 to Val-62, Gly-88 to Arg-91, and Gln-95. Positions Ala-129–Asp-166 are LID. Residue Arg-130 coordinates ATP. Zn(2+)-binding residues include Cys-133 and Cys-136. An ATP-binding site is contributed by Ile-139 to Tyr-140. Zn(2+)-binding residues include Cys-153 and Cys-156. Residues Arg-163 and Arg-174 each coordinate AMP. Residue Ile-202 coordinates ATP.

The protein belongs to the adenylate kinase family. Monomer.

It localises to the cytoplasm. The enzyme catalyses AMP + ATP = 2 ADP. It functions in the pathway purine metabolism; AMP biosynthesis via salvage pathway; AMP from ADP: step 1/1. In terms of biological role, catalyzes the reversible transfer of the terminal phosphate group between ATP and AMP. Plays an important role in cellular energy homeostasis and in adenine nucleotide metabolism. This chain is Adenylate kinase, found in Thermotoga maritima (strain ATCC 43589 / DSM 3109 / JCM 10099 / NBRC 100826 / MSB8).